Reading from the N-terminus, the 61-residue chain is Small ribosomal subunit protein uS14 (61 aa).

Zn(2+) contacts are provided by Cys24, Cys27, Cys40, and Cys43.

It belongs to the universal ribosomal protein uS14 family. Zinc-binding uS14 subfamily. Part of the 30S ribosomal subunit. Contacts proteins S3 and S10. Zn(2+) serves as cofactor.

In terms of biological role, binds 16S rRNA, required for the assembly of 30S particles and may also be responsible for determining the conformation of the 16S rRNA at the A site. In Mycoplasmopsis pulmonis (strain UAB CTIP) (Mycoplasma pulmonis), this protein is Small ribosomal subunit protein uS14.